The primary structure comprises 198 residues: Holliday junction branch migration complex subunit RuvA (198 aa).

The segment at 1–63 is domain I; it reads MYSYIIGVIT…EDASILYGFS (63 aa). Residues 64–142 are domain II; the sequence is SQKERELFNL…KDFVPSEKPV (79 aa). A flexible linker region spans residues 143 to 153; the sequence is NKEVKRSNDSE. Residues 153-198 form a domain III region; that stretch reads EFAREALLQLGYFKNDVDAFIENTDISGLSIEDIMKKAMKSLDSSR.

The protein belongs to the RuvA family. As to quaternary structure, homotetramer. Forms an RuvA(8)-RuvB(12)-Holliday junction (HJ) complex. HJ DNA is sandwiched between 2 RuvA tetramers; dsDNA enters through RuvA and exits via RuvB. An RuvB hexamer assembles on each DNA strand where it exits the tetramer. Each RuvB hexamer is contacted by two RuvA subunits (via domain III) on 2 adjacent RuvB subunits; this complex drives branch migration. In the full resolvosome a probable DNA-RuvA(4)-RuvB(12)-RuvC(2) complex forms which resolves the HJ.

It is found in the cytoplasm. Its function is as follows. The RuvA-RuvB-RuvC complex processes Holliday junction (HJ) DNA during genetic recombination and DNA repair, while the RuvA-RuvB complex plays an important role in the rescue of blocked DNA replication forks via replication fork reversal (RFR). RuvA specifically binds to HJ cruciform DNA, conferring on it an open structure. The RuvB hexamer acts as an ATP-dependent pump, pulling dsDNA into and through the RuvAB complex. HJ branch migration allows RuvC to scan DNA until it finds its consensus sequence, where it cleaves and resolves the cruciform DNA. This is Holliday junction branch migration complex subunit RuvA from Finegoldia magna (strain ATCC 29328 / DSM 20472 / WAL 2508) (Peptostreptococcus magnus).